Here is a 450-residue protein sequence, read N- to C-terminus: Enolase (450 aa).

Residue Gln-167 coordinates (2R)-2-phosphoglycerate. The Proton donor role is filled by Glu-209. Mg(2+) is bound by residues Asp-250, Glu-307, and Asp-334. (2R)-2-phosphoglycerate contacts are provided by Lys-359, Arg-388, Ser-389, and Lys-410. Lys-359 acts as the Proton acceptor in catalysis.

Belongs to the enolase family. Mg(2+) is required as a cofactor.

The protein localises to the cytoplasm. Its subcellular location is the secreted. It is found in the cell surface. It catalyses the reaction (2R)-2-phosphoglycerate = phosphoenolpyruvate + H2O. It functions in the pathway carbohydrate degradation; glycolysis; pyruvate from D-glyceraldehyde 3-phosphate: step 4/5. Its function is as follows. Catalyzes the reversible conversion of 2-phosphoglycerate (2-PG) into phosphoenolpyruvate (PEP). It is essential for the degradation of carbohydrates via glycolysis. In terms of biological role, 'Moonlights' as a plasminogen receptor and plasmin activator. Contributes to host (pig) cell adhesion; anti-enolase antibodies decrease binding to porcine kidney cells about 60%. Binds host plasminogen and fibronectin in vitro; enhances the activity of host tissue-specific plasminogen activator (tPA), and helps plasminogen and tPA degrade articifial host extracellular matrices. This chain is Enolase, found in Mesomycoplasma hyorhinis (strain HUB-1) (Mycoplasma hyorhinis).